Reading from the N-terminus, the 624-residue chain is Chitin elicitor receptor kinase 1 (624 aa).

A signal peptide spans 1 to 18 (MEASTSLLVLVLAAAAFA). The Extracellular portion of the chain corresponds to 19-240 (AGTVTEAAGD…SPGKGASAGA (222 aa)). Intrachain disulfides connect C30–C93, C34–C160, and C91–C158. N-linked (GlcNAc...) asparagine glycosylation occurs at N48. Position 115 to 121 (115 to 121 (RGQIYTS)) interacts with chitin. N128 carries an N-linked (GlcNAc...) asparagine glycan. 142-148 (PANNIPD) serves as a coordination point for chitin. Residues N153 and N157 are each glycosylated (N-linked (GlcNAc...) asparagine). The 46-residue stretch at 173–218 (LTYPLRAEDTLASVAATYGLSSQLDVVRRYNPGMESATGSGIVYIP) folds into the LysM domain. N223 carries N-linked (GlcNAc...) asparagine glycosylation. The chain crosses the membrane as a helical span at residues 241–261 (IAGGVVAGVVVLAAIFLYIIF). Topologically, residues 262–624 (YRRRKAKQAT…QGLVNLMSGR (363 aa)) are cytoplasmic. One can recognise a Protein kinase domain in the interval 324–599 (FSIGNKIGQG…RSVVVALMTL (276 aa)). ATP-binding positions include 330-338 (IGQGGFGAV) and K351. The Proton acceptor role is filled by D443.

Belongs to the protein kinase superfamily. Ser/Thr protein kinase family. As to quaternary structure, homooligomer. Interacts with CEBIP. Interacts with LYP4 and LYP6. Interacts with RLCK176. Post-translationally, autophosphorylated; induced by chitin and derivatives. Expressed in seedlings, roots, shoots and stems, and, to a lower extent, in flowers.

The protein localises to the cell membrane. It catalyses the reaction L-seryl-[protein] + ATP = O-phospho-L-seryl-[protein] + ADP + H(+). The catalysed reaction is L-threonyl-[protein] + ATP = O-phospho-L-threonyl-[protein] + ADP + H(+). In terms of biological role, lysin motif (LysM) receptor kinase required as a cell surface receptor for chitin elicitor (chitooligosaccharides) signaling leading to innate immunity in response to biotic stresses. Involved in the resistance to pathogenic fungi, probably by sensing microbe-associated molecular patterns (MAMP) and pathogen-associated molecular patterns (PAMP). Involved in the detection of microbial peptidoglycans (PGNs) and mediates PGN response. Plays dual roles in PGN and chitin signaling during innate immunity. Acts as an adapter for LYP4 and LYP6 and mediates signal transduction from the extracellular to intracellular spaces. Participates in the activation of defense genes during response to PGN and chitin. Phosphorylates the downstream partner RLCK185 in response to chitin elicitation. The sequence is that of Chitin elicitor receptor kinase 1 from Oryza sativa subsp. japonica (Rice).